Reading from the N-terminus, the 534-residue chain is Steroid hormone receptor family member cnr14 (534 aa).

2 disordered regions span residues 30-53 and 119-139; these read SGKT…QWSH and PATS…GHTT. Low complexity predominate over residues 119–130; it reads PATSVTSSLSPP. The nuclear receptor DNA-binding region spans 148 to 223; it reads ISFCKVCGDK…SGMSKDSVRQ (76 aa). 2 consecutive NR C4-type zinc fingers follow at residues 151–171 and 187–211; these read CKVC…CEGC and CLKQ…FKKC. Residues 252-493 form the NR LBD domain; that stretch reads EVDAVYEAVL…PPLVVEMFQL (242 aa). Residues 502 to 534 form a disordered region; the sequence is HNNQENQYTPAPEHQSPQPQQPTPNQQQTPVHC. A compositionally biased stretch (low complexity) spans 511–534; that stretch reads PAPEHQSPQPQQPTPNQQQTPVHC.

This sequence belongs to the nuclear hormone receptor family. NR1 subfamily. In terms of tissue distribution, most abundant in embryos.

It localises to the nucleus. In terms of biological role, transcriptional regulator which is involved in the sex determination and X chromosome dosage compensation pathways. Directly binds to five 5'-A(G/C)(G/T)(T/G)C(A/G)-3' sites in the promoter of sex-determining factor xol-1 to negatively regulate its expression and promote hermaphrodite development. Together with fox-1 is involved in making the distinction between one and two X-chromosomes. Plays a role in the fox-1-mediated repression of the functionally active isoform (isoform b) of the sex-determining factor xol-1 gene to promote hermaphrodite development. Plays a role in the association of the dosage compensation complex proteins dpy-27 and sdc-3 with the hermaphrodite X chromosomes. This is Steroid hormone receptor family member cnr14 from Caenorhabditis elegans.